The sequence spans 383 residues: Succinyl-diaminopimelate desuccinylase (383 aa).

Histidine 73 lines the Zn(2+) pocket. The active site involves aspartate 75. Residue aspartate 107 participates in Zn(2+) binding. Glutamate 141 (proton acceptor) is an active-site residue. Zn(2+)-binding residues include glutamate 142, glutamate 170, and histidine 356.

It belongs to the peptidase M20A family. DapE subfamily. As to quaternary structure, homodimer. Zn(2+) serves as cofactor. Requires Co(2+) as cofactor.

The enzyme catalyses N-succinyl-(2S,6S)-2,6-diaminopimelate + H2O = (2S,6S)-2,6-diaminopimelate + succinate. Its pathway is amino-acid biosynthesis; L-lysine biosynthesis via DAP pathway; LL-2,6-diaminopimelate from (S)-tetrahydrodipicolinate (succinylase route): step 3/3. Functionally, catalyzes the hydrolysis of N-succinyl-L,L-diaminopimelic acid (SDAP), forming succinate and LL-2,6-diaminopimelate (DAP), an intermediate involved in the bacterial biosynthesis of lysine and meso-diaminopimelic acid, an essential component of bacterial cell walls. This Pseudomonas entomophila (strain L48) protein is Succinyl-diaminopimelate desuccinylase.